The primary structure comprises 1011 residues: Translation initiation factor IF-2 (1011 aa).

The span at 49 to 77 shows a compositional bias: basic and acidic residues; that stretch reads YIHEHGTEESPRRRSAGEDEFKPKIDLSK. 2 disordered regions span residues 49–152 and 187–407; these read YIHE…RFIT and AAPA…LSLS. Positions 93–104 are enriched in pro residues; it reads APPPPPPPPPRP. The span at 105–115 shows a compositional bias: low complexity; it reads AVKAPSPVSQE. Residues 116 to 126 are compositionally biased toward pro residues; it reads PRPPAVPPAPQ. Composition is skewed to low complexity over residues 187–212 and 228–242; these read AAPA…KAPV and TAKP…AATP. 2 stretches are compositionally biased toward pro residues: residues 243 to 252 and 276 to 290; these read APTPGRPLPG and SAPP…PPPQ. Gly residues predominate over residues 316–329; it reads GPGGGSGGPGGFQR. The segment covering 361–380 has biased composition (low complexity); the sequence is LAPPGAPANKPAGRPAPARR. One can recognise a tr-type G domain in the interval 502–678; the sequence is VRPPVVTIMG…CLVADLGDLK (177 aa). Residues 511–518 are G1; the sequence is GHVDHGKT. 511-518 contacts GTP; it reads GHVDHGKT. The G2 stretch occupies residues 536–540; that stretch reads GITQH. Residues 564 to 567 form a G3 region; the sequence is DTPG. GTP is bound by residues 564–568 and 618–621; these read DTPGH and NKID. Residues 618–621 are G4; it reads NKID. Residues 654–656 are G5; that stretch reads SAK.

The protein belongs to the TRAFAC class translation factor GTPase superfamily. Classic translation factor GTPase family. IF-2 subfamily.

It localises to the cytoplasm. Its function is as follows. One of the essential components for the initiation of protein synthesis. Protects formylmethionyl-tRNA from spontaneous hydrolysis and promotes its binding to the 30S ribosomal subunits. Also involved in the hydrolysis of GTP during the formation of the 70S ribosomal complex. This Koribacter versatilis (strain Ellin345) protein is Translation initiation factor IF-2.